A 222-amino-acid polypeptide reads, in one-letter code: UPF0758 protein CT0611 (222 aa).

An MPN domain is found at 100–222; sequence KVKGARDVFE…WFSFRDHALL (123 aa). 3 residues coordinate Zn(2+): His171, His173, and Asp184. The JAMM motif signature appears at 171-184; the sequence is HNHPSGDVQPSNAD.

Belongs to the UPF0758 family.

This is UPF0758 protein CT0611 from Chlorobaculum tepidum (strain ATCC 49652 / DSM 12025 / NBRC 103806 / TLS) (Chlorobium tepidum).